Reading from the N-terminus, the 265-residue chain is Ubiquinone biosynthesis protein COQ4 homolog, mitochondrial (265 aa).

The Zn(2+) site is built by histidine 162, aspartate 163, histidine 166, and glutamate 178.

The protein belongs to the COQ4 family. In terms of assembly, component of a multi-subunit COQ enzyme complex. Requires Zn(2+) as cofactor.

Its subcellular location is the mitochondrion inner membrane. It catalyses the reaction a 4-hydroxy-3-methoxy-5-(all-trans-polyprenyl)benzoate + H(+) = a 2-methoxy-6-(all-trans-polyprenyl)phenol + CO2. It participates in cofactor biosynthesis; ubiquinone biosynthesis. In terms of biological role, lyase that catalyzes the C1-decarboxylation of 4-hydroxy-3-methoxy-5-(all-trans-polyprenyl)benzoic acid into 2-methoxy-6-(all-trans-polyprenyl)phenol during ubiquinone biosynthesis. The sequence is that of Ubiquinone biosynthesis protein COQ4 homolog, mitochondrial from Drosophila willistoni (Fruit fly).